The chain runs to 57 residues: UPF0391 membrane protein RPB_2024 (57 aa).

Helical transmembrane passes span 4–24 (WVVT…GGIA) and 30–50 (IAKV…VVGL).

This sequence belongs to the UPF0391 family.

It is found in the cell membrane. In Rhodopseudomonas palustris (strain HaA2), this protein is UPF0391 membrane protein RPB_2024.